The following is a 416-amino-acid chain: Putative competence-damage inducible protein (416 aa).

The protein belongs to the CinA family.

The chain is Putative competence-damage inducible protein from Bacillus velezensis (strain DSM 23117 / BGSC 10A6 / LMG 26770 / FZB42) (Bacillus amyloliquefaciens subsp. plantarum).